The primary structure comprises 306 residues: Tyrosine recombinase XerC (306 aa).

The 87-residue stretch at 6–92 folds into the Core-binding (CB) domain; the sequence is NTLYLQTKPY…ALRQWFSYLI (87 aa). The region spanning 113–292 is the Tyr recombinase domain; the sequence is RLPKNIDAEQ…DFQHLAKIYD (180 aa). Catalysis depends on residues R152, K176, H244, R247, and H270. The O-(3'-phospho-DNA)-tyrosine intermediate role is filled by Y279.

The protein belongs to the 'phage' integrase family. XerC subfamily. In terms of assembly, forms a cyclic heterotetrameric complex composed of two molecules of XerC and two molecules of XerD.

The protein resides in the cytoplasm. Site-specific tyrosine recombinase, which acts by catalyzing the cutting and rejoining of the recombining DNA molecules. The XerC-XerD complex is essential to convert dimers of the bacterial chromosome into monomers to permit their segregation at cell division. It also contributes to the segregational stability of plasmids. The protein is Tyrosine recombinase XerC of Actinobacillus pleuropneumoniae serotype 7 (strain AP76).